A 261-amino-acid chain; its full sequence is Indole-3-glycerol phosphate synthase (261 aa).

It belongs to the TrpC family.

The catalysed reaction is 1-(2-carboxyphenylamino)-1-deoxy-D-ribulose 5-phosphate + H(+) = (1S,2R)-1-C-(indol-3-yl)glycerol 3-phosphate + CO2 + H2O. Its pathway is amino-acid biosynthesis; L-tryptophan biosynthesis; L-tryptophan from chorismate: step 4/5. The sequence is that of Indole-3-glycerol phosphate synthase from Burkholderia ambifaria (strain MC40-6).